Here is a 223-residue protein sequence, read N- to C-terminus: 7-cyano-7-deazaguanine synthase (223 aa).

15–25 (FSGGQDSTTCL) lines the ATP pocket. Zn(2+)-binding residues include Cys191, Cys200, Cys203, and Cys206.

Belongs to the QueC family. As to quaternary structure, homodimer. Zn(2+) is required as a cofactor.

The enzyme catalyses 7-carboxy-7-deazaguanine + NH4(+) + ATP = 7-cyano-7-deazaguanine + ADP + phosphate + H2O + H(+). It participates in purine metabolism; 7-cyano-7-deazaguanine biosynthesis. Catalyzes the ATP-dependent conversion of 7-carboxy-7-deazaguanine (CDG) to 7-cyano-7-deazaguanine (preQ(0)). The sequence is that of 7-cyano-7-deazaguanine synthase from Staphylococcus saprophyticus subsp. saprophyticus (strain ATCC 15305 / DSM 20229 / NCIMB 8711 / NCTC 7292 / S-41).